Consider the following 281-residue polypeptide: 2-dehydro-3-deoxyphosphooctonate aldolase (281 aa).

It belongs to the KdsA family.

It localises to the cytoplasm. It carries out the reaction D-arabinose 5-phosphate + phosphoenolpyruvate + H2O = 3-deoxy-alpha-D-manno-2-octulosonate-8-phosphate + phosphate. It functions in the pathway carbohydrate biosynthesis; 3-deoxy-D-manno-octulosonate biosynthesis; 3-deoxy-D-manno-octulosonate from D-ribulose 5-phosphate: step 2/3. The protein operates within bacterial outer membrane biogenesis; lipopolysaccharide biosynthesis. This Ectopseudomonas mendocina (strain ymp) (Pseudomonas mendocina) protein is 2-dehydro-3-deoxyphosphooctonate aldolase.